The chain runs to 512 residues: Retinaldehyde dehydrogenase 3 (512 aa).

The tract at residues 1–22 (MATANGAVENGQPDRKPPALPR) is disordered. At Ala-2 the chain carries N-acetylalanine. Residues Lys-204, Glu-207, and 257–262 (GSTEVG) contribute to the NAD(+) site. Catalysis depends on Glu-280, which acts as the Proton acceptor. Cys-314 (nucleophile) is an active-site residue. Residues Gln-361 and Glu-411 each coordinate NAD(+).

The protein belongs to the aldehyde dehydrogenase family. As to quaternary structure, homotetramer. Expressed at low levels in many tissues and at higher levels in salivary gland, stomach, and kidney.

Its subcellular location is the cytoplasm. The catalysed reaction is all-trans-retinal + NAD(+) + H2O = all-trans-retinoate + NADH + 2 H(+). It catalyses the reaction retinal + NAD(+) + H2O = retinoate + NADH + 2 H(+). The enzyme catalyses all-trans-13,14-dihydroretinal + NAD(+) + H2O = all-trans-13,14-dihydroretinoate + NADH + 2 H(+). The protein operates within cofactor metabolism; retinol metabolism. Functionally, catalyzes the NAD-dependent oxidation of aldehyde substrates, such as all-trans-retinal and all-trans-13,14-dihydroretinal, to their corresponding carboxylic acids, all-trans-retinoate and all-trans-13,14-dihydroretinoate, respectively. High specificity for all-trans-retinal as substrate, can also accept acetaldehyde as substrate in vitro but with lower affinity. Required for the biosynthesis of normal levels of retinoate in the embryonic ocular and nasal regions; a critical lipid in the embryonic development of the eye and the nasal region. This Homo sapiens (Human) protein is Retinaldehyde dehydrogenase 3 (ALDH1A3).